A 140-amino-acid chain; its full sequence is Large ribosomal subunit protein uL11 (140 aa).

This sequence belongs to the universal ribosomal protein uL11 family. As to quaternary structure, part of the ribosomal stalk of the 50S ribosomal subunit. Interacts with L10 and the large rRNA to form the base of the stalk. L10 forms an elongated spine to which L12 dimers bind in a sequential fashion forming a multimeric L10(L12)X complex. In terms of processing, one or more lysine residues are methylated.

Its function is as follows. Forms part of the ribosomal stalk which helps the ribosome interact with GTP-bound translation factors. This chain is Large ribosomal subunit protein uL11, found in Geobacter metallireducens (strain ATCC 53774 / DSM 7210 / GS-15).